Reading from the N-terminus, the 525-residue chain is uncharacterized protein (525 aa).

Transmembrane regions (helical) follow at residues 36 to 56 (AVAA…TLAL) and 61 to 81 (ALPA…AAAI). Residues 173–228 (SAVDIRLERTSADGPQFAHIYCEMTPLRDAEGNLLAIVAQSRDVSEEARLQAEAAA) enclose the PAC domain. The Histidine kinase domain occupies 246–466 (AVSHELRTPL…VIVVTIPSDA (221 aa)). Histidine 249 carries the post-translational modification Phosphohistidine; by autocatalysis. A disordered region spans residues 506 to 525 (LHTGEIGREGGHGAAQAKTA).

Its subcellular location is the cell membrane. It carries out the reaction ATP + protein L-histidine = ADP + protein N-phospho-L-histidine.. This is an uncharacterized protein from Rhizobium meliloti (strain 1021) (Ensifer meliloti).